A 98-amino-acid chain; its full sequence is Integration host factor subunit alpha (98 aa).

Residues 53–69 are compositionally biased toward basic and acidic residues; sequence DLREKSERPGRNPKTGE. Residues 53–73 form a disordered region; the sequence is DLREKSERPGRNPKTGEDIPI.

It belongs to the bacterial histone-like protein family. In terms of assembly, heterodimer of an alpha and a beta chain.

In terms of biological role, this protein is one of the two subunits of integration host factor, a specific DNA-binding protein that functions in genetic recombination as well as in transcriptional and translational control. The protein is Integration host factor subunit alpha of Aliivibrio salmonicida (strain LFI1238) (Vibrio salmonicida (strain LFI1238)).